The chain runs to 430 residues: Mothers against decapentaplegic homolog 9 (430 aa).

The region spanning 16 to 140 (PAVKRLLGWK…YRRVETPVLP (125 aa)) is the MH1 domain. 4 residues coordinate Zn(2+): C68, C113, C125, and H130. Positions 186 to 222 (CPAPPSSPGHVFPQSPCPTSYPHSPGSPSESDSPYQH) are disordered. Over residues 202 to 221 (CPTSYPHSPGSPSESDSPYQ) the composition is skewed to polar residues. One can recognise an MH2 domain in the interval 236-430 (WCSVAYYELN…SPHNPISSVS (195 aa)).

This sequence belongs to the dwarfin/SMAD family. In terms of assembly, interaction with the co-SMAD SMAD4. Interacts with PEBP2-alpha subunit. Interacts with RANBP3L. Post-translationally, phosphorylated on serine by BMP (bone morphogenetic proteins) type 1 receptor kinase and activin type I receptor-like kinases (ALK-2, ALK-3 and ALK-6).

Its subcellular location is the cytoplasm. The protein resides in the nucleus. In terms of biological role, transcriptional modulator activated by BMP (bone morphogenetic proteins) type 1 receptor kinase. SMAD9 is a receptor-regulated SMAD (R-SMAD). Has been shown to be activated by activin type I receptor-like kinases (ALK-2, ALK-3, ALK-6) which stimulate heteromerization between SMAD9 and SMAD4. May play a role in osteoblast differentiation and maturation. The protein is Mothers against decapentaplegic homolog 9 (Smad9) of Mus musculus (Mouse).